Here is a 178-residue protein sequence, read N- to C-terminus: Large ribosomal subunit protein uL10 (178 aa).

The protein belongs to the universal ribosomal protein uL10 family. Part of the ribosomal stalk of the 50S ribosomal subunit. The N-terminus interacts with L11 and the large rRNA to form the base of the stalk. The C-terminus forms an elongated spine to which L12 dimers bind in a sequential fashion forming a multimeric L10(L12)X complex.

In terms of biological role, forms part of the ribosomal stalk, playing a central role in the interaction of the ribosome with GTP-bound translation factors. The polypeptide is Large ribosomal subunit protein uL10 (Gloeothece citriformis (strain PCC 7424) (Cyanothece sp. (strain PCC 7424))).